The primary structure comprises 164 residues: Peptidyl-prolyl cis-trans isomerase A-like 4F (164 aa).

In terms of domain architecture, PPIase cyclophilin-type spans 7–163 (FFEITRDGKP…KKITIADCGQ (157 aa)).

It belongs to the cyclophilin-type PPIase family. PPIase A subfamily.

It is found in the cytoplasm. The enzyme catalyses [protein]-peptidylproline (omega=180) = [protein]-peptidylproline (omega=0). Its function is as follows. PPIases accelerate the folding of proteins. It catalyzes the cis-trans isomerization of proline imidic peptide bonds in oligopeptides. The protein is Peptidyl-prolyl cis-trans isomerase A-like 4F of Homo sapiens (Human).